The primary structure comprises 105 residues: Large ribosomal subunit protein uL24 (105 aa).

Belongs to the universal ribosomal protein uL24 family. As to quaternary structure, part of the 50S ribosomal subunit.

In terms of biological role, one of two assembly initiator proteins, it binds directly to the 5'-end of the 23S rRNA, where it nucleates assembly of the 50S subunit. One of the proteins that surrounds the polypeptide exit tunnel on the outside of the subunit. In Methylocella silvestris (strain DSM 15510 / CIP 108128 / LMG 27833 / NCIMB 13906 / BL2), this protein is Large ribosomal subunit protein uL24.